The sequence spans 25 residues: FFGSLLSLGSKLLPSVFKLFQRKKE.

Expressed by the venom gland.

The protein localises to the secreted. It localises to the target cell membrane. In terms of biological role, amphipathic peptide that shows antibacterial activity against E.coli (MIC=12.5 ug/ml) and S.aureus (MIC=12.5 ug/ml). Has hemolytic activity against human erythrocytes (25 uM provokes 83% of hemolysis). May act by disrupting the integrity of the bacterial cell membrane. Increases efficacy of antibiotics (ethambutol, pyrazinamide, isoniazid, rifampicin) when tested against S.aureus, probably by facilitating their incorporation into the bacteria. In Centruroides suffusus (Durango bark scorpion), this protein is Css54.